Consider the following 365-residue polypeptide: P2Y purinoceptor 4 (365 aa).

Topologically, residues Met1–Lys34 are extracellular. The helical transmembrane segment at Phe35 to Ile61 threads the bilayer. At Phe62–Thr72 the chain is on the cytoplasmic side. Residues Tyr73–Tyr95 form a helical membrane-spanning segment. Topologically, residues Ala96 to Arg112 are extracellular. Residues Cys108 and Cys185 are joined by a disulfide bond. Residues Phe113–Val131 form a helical membrane-spanning segment. Residues His132–Leu154 lie on the Cytoplasmic side of the membrane. A helical membrane pass occupies residues Leu155 to Val174. The Extracellular segment spans residues Thr175 to His196. A helical transmembrane segment spans residues Tyr197–Leu222. Over Met223 to Thr246 the chain is Cytoplasmic. The chain crosses the membrane as a helical span at residues Ile247–Tyr269. Topologically, residues Leu270 to Val287 are extracellular. The chain crosses the membrane as a helical span at residues Tyr288 to Thr309. The Cytoplasmic segment spans residues Gly310–Leu365. 2 positions are modified to phosphoserine: Ser333 and Ser334.

Belongs to the G-protein coupled receptor 1 family. Post-translationally, phosphorylation of Ser-333 and Ser-334 is a key step in agonist-dependent desensitization and loss of surface P2RY4. This phosphorylation does not involve PKC, nor other calcium activated kinases. In terms of tissue distribution, pancreas.

The protein resides in the cell membrane. Receptor for UTP and UDP coupled to G-proteins that activate a phosphatidylinositol-calcium second messenger system. Not activated by ATP or ADP. In Homo sapiens (Human), this protein is P2Y purinoceptor 4 (P2RY4).